A 685-amino-acid polypeptide reads, in one-letter code: Cilia- and flagella-associated protein 36 (685 aa).

A disordered region spans residues 1–20 (MLRRFSKKNKNPEGGSDDAS). Residues 197 to 242 (SEELEMMAQNSRIQREALEQEIRKEEILLQQALDEGARAQNQNQNQ) adopt a coiled-coil conformation. Residues 287 to 310 (TGTMTSSTGVSVGTLTNTGVSSGT) show a composition bias toward low complexity. The segment at 287 to 573 (TGTMTSSTGV…LRGNKYDGDV (287 aa)) is disordered. Basic and acidic residues predominate over residues 363 to 372 (EAEKSKRERP). Polar residues predominate over residues 410–434 (GTTSKKSIATVTASPEMSSKTTQME). Basic and acidic residues-rich tracts occupy residues 439–456 (GEGK…ERKY) and 508–557 (HEPR…ESKP).

Belongs to the CFAP36 family. Expressed in amphid and phasmid ciliated neurons.

The protein resides in the cell projection. It localises to the cilium. The protein localises to the cytoplasm. Its subcellular location is the cytoskeleton. It is found in the cilium axoneme. The sequence is that of Cilia- and flagella-associated protein 36 from Caenorhabditis elegans.